A 258-amino-acid chain; its full sequence is MGQTIKEIKATLAKLTDLSAKEFLEYEADERAGVQAALKSRKKQILAELAEEARLEQMLEFEKELYGQEIQLIAGIDEVGRGPLAGPVVTAAVILPKNCKIRGLNDSKKVPKSKHHAILSEIQEKALAIGIGIVDAEKIDEVNIYEATKIAMIQAVSKLSVKPEHLLIDAMVLDFPIAQTKIIHGDARSASIAAASIVAKVTRDEMMKEFALEFPEYDFEHNAGYGTAKHLEALTKYGITRIHRKSYEPIKTMVNFKS.

Residues 71-258 (QLIAGIDEVG…PIKTMVNFKS (188 aa)) enclose the RNase H type-2 domain. Residues Asp77, Glu78, and Asp169 each coordinate a divalent metal cation.

This sequence belongs to the RNase HII family. Requires Mn(2+) as cofactor. The cofactor is Mg(2+).

It localises to the cytoplasm. It catalyses the reaction Endonucleolytic cleavage to 5'-phosphomonoester.. Its function is as follows. Endonuclease that specifically degrades the RNA of RNA-DNA hybrids. This Lactococcus lactis subsp. lactis (strain IL1403) (Streptococcus lactis) protein is Ribonuclease HII (rnhB).